We begin with the raw amino-acid sequence, 439 residues long: Enolase (439 aa).

Gln163 serves as a coordination point for (2R)-2-phosphoglycerate. Glu205 acts as the Proton donor in catalysis. 3 residues coordinate Mg(2+): Asp242, Glu287, and Asp314. Residues Lys339, Arg368, Ser369, and Lys390 each coordinate (2R)-2-phosphoglycerate. Residue Lys339 is the Proton acceptor of the active site.

This sequence belongs to the enolase family. Mg(2+) is required as a cofactor.

It localises to the cytoplasm. Its subcellular location is the secreted. It is found in the cell surface. It carries out the reaction (2R)-2-phosphoglycerate = phosphoenolpyruvate + H2O. It participates in carbohydrate degradation; glycolysis; pyruvate from D-glyceraldehyde 3-phosphate: step 4/5. Its function is as follows. Catalyzes the reversible conversion of 2-phosphoglycerate (2-PG) into phosphoenolpyruvate (PEP). It is essential for the degradation of carbohydrates via glycolysis. The sequence is that of Enolase from Levilactobacillus brevis (strain ATCC 367 / BCRC 12310 / CIP 105137 / JCM 1170 / LMG 11437 / NCIMB 947 / NCTC 947) (Lactobacillus brevis).